The following is a 685-amino-acid chain: Diphthine--ammonia ligase (685 aa).

The protein in the C-terminal section; belongs to the RutC family. This sequence in the N-terminal section; belongs to the Diphthine--ammonia ligase family. As to quaternary structure, interacts with elongation factor 2 (eEF-2; EFT1 or EFT2).

The protein localises to the cytoplasm. The enzyme catalyses diphthine-[translation elongation factor 2] + NH4(+) + ATP = diphthamide-[translation elongation factor 2] + AMP + diphosphate + H(+). Its pathway is protein modification; peptidyl-diphthamide biosynthesis. In terms of biological role, amidase that catalyzes the last step of diphthamide biosynthesis using ammonium and ATP. Diphthamide biosynthesis consists in the conversion of an L-histidine residue in the translation elongation factor eEF-2 (EFT1 or EFT2) to diphthamide. In Saccharomyces cerevisiae (strain ATCC 204508 / S288c) (Baker's yeast), this protein is Diphthine--ammonia ligase (DPH6).